Reading from the N-terminus, the 331-residue chain is Nacrein-like protein P1 (331 aa).

The 331-residue stretch at 1 to 331 (QSPINIVSYD…LHALRNVEGY (331 aa)) folds into the Alpha-carbonic anhydrase domain. Zn(2+) is bound by residues histidine 69, histidine 71, and histidine 94. The disordered stretch occupies residues 138–240 (DEPDDEECKR…GENGHKHGCR (103 aa)). Residues 144-156 (ECKRILKGHHPDN) show a composition bias toward basic and acidic residues. A compositionally biased stretch (low complexity) spans 157–232 (NENGNGDNGN…NNGENGNNGE (76 aa)). A run of 24 repeats spans residues 162-164 (GDN), 165-167 (GNN), 168-170 (GYN), 171-173 (GDN), 174-176 (GNN), 177-179 (GDN), 180-182 (GNN), 183-185 (GYN), 186-188 (GDN), 189-191 (GNN), 192-194 (GDN), 195-197 (GNN), 198-200 (GYN), 201-203 (GDN), 204-206 (GNN), 207-209 (GDN), 210-212 (GNN), 213-215 (GEN), 216-218 (GNN), 219-221 (GEN), 222-224 (GNN), 225-227 (GEN), 228-229 (GN), and 231-233 (GEN). The interval 162-233 (GDNGNNGYNG…NGENGNNGEN (72 aa)) is 24 X 3 AA approximate tandem repeats of G-X-N. 298–299 (TT) serves as a coordination point for substrate.

This sequence belongs to the alpha-carbonic anhydrase family. As to quaternary structure, homooligomer; disulfide-linked. May also be disulfide-linked to insoluble organic matrix. Requires Zn(2+) as cofactor. In terms of tissue distribution, expressed in the mantle.

Its subcellular location is the secreted. It is found in the extracellular space. It localises to the extracellular matrix. It catalyses the reaction hydrogencarbonate + H(+) = CO2 + H2O. In terms of biological role, acts as a negative regulator for calcification in the shells of mollusks. May function both as a calcium concentrator and as a carbonic anhydrase required for production of carbonate ions, which are assembled to CaCO(3) at mineralization sites. Is important for shell formation in both the calcitic prismatic layer and the aragonitic nacreous layer. Shows inhibitory activity of crystal formation when present in free state but, when attached to the insoluble matrix, may regulate the form and size of aragonite crystal. This chain is Nacrein-like protein P1, found in Mizuhopecten yessoensis (Japanese scallop).